A 256-amino-acid chain; its full sequence is MNDIWWQTYGEGNCHLVLLHGWGLNAEVWHCIREELGSHFTLHLVDLPGYGRSSGFGAMTLEEMTAQVAKNAPDQAIWLGWSLGGLVASQMALTHPERVQALVTVASSPCFSAREGWPGIKPEILGGFQQQLSDDFQRTVERFLALQTLGTETARQDARTLKSVVLAQPMPDVEVLNGGLEILKTVDLREALKNVNMPFLRLYGYLDGLVPRKIVPLLDTLWPHSTSQIMAKAAHAPFISHPAAFCQALMTLKSSL.

Positions 15-242 constitute an AB hydrolase-1 domain; sequence HLVLLHGWGL…AAHAPFISHP (228 aa). Residues Trp-22, 82–83, and 143–147 each bind substrate; these read SL and FLALQ. Residue Ser-82 is the Nucleophile of the active site. Residues Asp-207 and His-235 contribute to the active site. His-235 lines the substrate pocket.

It belongs to the AB hydrolase superfamily. Carboxylesterase BioH family. As to quaternary structure, monomer.

The protein resides in the cytoplasm. It catalyses the reaction 6-carboxyhexanoyl-[ACP] methyl ester + H2O = 6-carboxyhexanoyl-[ACP] + methanol + H(+). It functions in the pathway cofactor biosynthesis; biotin biosynthesis. Its function is as follows. The physiological role of BioH is to remove the methyl group introduced by BioC when the pimeloyl moiety is complete. It allows to synthesize pimeloyl-ACP via the fatty acid synthetic pathway through the hydrolysis of the ester bonds of pimeloyl-ACP esters. This Salmonella dublin (strain CT_02021853) protein is Pimeloyl-[acyl-carrier protein] methyl ester esterase.